A 43-amino-acid chain; its full sequence is ORF7b protein (43 aa).

Residues 9-29 (FYLCFLAFLLFLVLIMLIIFW) form a helical membrane-spanning segment.

The protein resides in the host Golgi apparatus membrane. Its subcellular location is the host endosome membrane. In Homo sapiens (Human), this protein is ORF7b protein.